The following is a 408-amino-acid chain: Imidazolonepropionase (408 aa).

Fe(3+) contacts are provided by His-73 and His-75. Residues His-73 and His-75 each contribute to the Zn(2+) site. 3 residues coordinate 4-imidazolone-5-propanoate: Arg-82, Tyr-145, and His-178. Tyr-145 contacts N-formimidoyl-L-glutamate. Residue His-243 coordinates Fe(3+). Zn(2+) is bound at residue His-243. A 4-imidazolone-5-propanoate-binding site is contributed by Gln-246. Asp-318 serves as a coordination point for Fe(3+). A Zn(2+)-binding site is contributed by Asp-318. Asn-320 and Gly-322 together coordinate N-formimidoyl-L-glutamate. A 4-imidazolone-5-propanoate-binding site is contributed by Ser-323.

It belongs to the metallo-dependent hydrolases superfamily. HutI family. It depends on Zn(2+) as a cofactor. Requires Fe(3+) as cofactor.

It localises to the cytoplasm. It catalyses the reaction 4-imidazolone-5-propanoate + H2O = N-formimidoyl-L-glutamate. It functions in the pathway amino-acid degradation; L-histidine degradation into L-glutamate; N-formimidoyl-L-glutamate from L-histidine: step 3/3. Catalyzes the hydrolytic cleavage of the carbon-nitrogen bond in imidazolone-5-propanoate to yield N-formimidoyl-L-glutamate. It is the third step in the universal histidine degradation pathway. The protein is Imidazolonepropionase of Shewanella baltica (strain OS155 / ATCC BAA-1091).